The following is a 286-amino-acid chain: Bifunctional protein FolD (286 aa).

NADP(+)-binding positions include G165–S167, S190, and V231.

It belongs to the tetrahydrofolate dehydrogenase/cyclohydrolase family. Homodimer.

The enzyme catalyses (6R)-5,10-methylene-5,6,7,8-tetrahydrofolate + NADP(+) = (6R)-5,10-methenyltetrahydrofolate + NADPH. The catalysed reaction is (6R)-5,10-methenyltetrahydrofolate + H2O = (6R)-10-formyltetrahydrofolate + H(+). Its pathway is one-carbon metabolism; tetrahydrofolate interconversion. Catalyzes the oxidation of 5,10-methylenetetrahydrofolate to 5,10-methenyltetrahydrofolate and then the hydrolysis of 5,10-methenyltetrahydrofolate to 10-formyltetrahydrofolate. In Bacillus cereus (strain ZK / E33L), this protein is Bifunctional protein FolD.